Consider the following 181-residue polypeptide: Transcription termination/antitermination protein NusG (181 aa).

Residues 130–161 (PGELVRVSDGPFADFNGVVEEVDYEKSRLKVS) enclose the KOW domain.

This sequence belongs to the NusG family. In terms of assembly, monomer. Interacts with the transcription termination factor Rho and with RNA polymerase.

Functionally, participates in transcription elongation, termination and antitermination. In the absence of Rho, increases the rate of transcription elongation by the RNA polymerase (RNAP), probably by partially suppressing pausing. In the presence of Rho, modulates most Rho-dependent termination events by interacting with the RNAP to render the complex more susceptible to the termination activity of Rho. May be required to overcome a kinetic limitation of Rho to function at certain terminators. Also involved in ribosomal RNA transcriptional antitermination. The polypeptide is Transcription termination/antitermination protein NusG (Yersinia pestis).